The primary structure comprises 418 residues: tRNA-2-methylthio-N(6)-dimethylallyladenosine synthase (418 aa).

Residues proline 2–leucine 118 form the MTTase N-terminal domain. [4Fe-4S] cluster-binding residues include cysteine 11, cysteine 47, cysteine 81, cysteine 134, cysteine 138, and cysteine 141. Residues leucine 120 to alanine 352 enclose the Radical SAM core domain. The TRAM domain maps to serine 354–lysine 414.

It belongs to the methylthiotransferase family. MiaB subfamily. Monomer. [4Fe-4S] cluster is required as a cofactor.

It is found in the cytoplasm. The enzyme catalyses N(6)-dimethylallyladenosine(37) in tRNA + (sulfur carrier)-SH + AH2 + 2 S-adenosyl-L-methionine = 2-methylsulfanyl-N(6)-dimethylallyladenosine(37) in tRNA + (sulfur carrier)-H + 5'-deoxyadenosine + L-methionine + A + S-adenosyl-L-homocysteine + 2 H(+). Functionally, catalyzes the methylthiolation of N6-(dimethylallyl)adenosine (i(6)A), leading to the formation of 2-methylthio-N6-(dimethylallyl)adenosine (ms(2)i(6)A) at position 37 in tRNAs that read codons beginning with uridine. This Dehalococcoides mccartyi (strain ATCC BAA-2266 / KCTC 15142 / 195) (Dehalococcoides ethenogenes (strain 195)) protein is tRNA-2-methylthio-N(6)-dimethylallyladenosine synthase.